A 244-amino-acid polypeptide reads, in one-letter code: 1-(5-phosphoribosyl)-5-[(5-phosphoribosylamino)methylideneamino] imidazole-4-carboxamide isomerase (244 aa).

The active-site Proton acceptor is aspartate 10. Aspartate 132 (proton donor) is an active-site residue.

Belongs to the HisA/HisF family.

It localises to the cytoplasm. It carries out the reaction 1-(5-phospho-beta-D-ribosyl)-5-[(5-phospho-beta-D-ribosylamino)methylideneamino]imidazole-4-carboxamide = 5-[(5-phospho-1-deoxy-D-ribulos-1-ylimino)methylamino]-1-(5-phospho-beta-D-ribosyl)imidazole-4-carboxamide. It participates in amino-acid biosynthesis; L-histidine biosynthesis; L-histidine from 5-phospho-alpha-D-ribose 1-diphosphate: step 4/9. The sequence is that of 1-(5-phosphoribosyl)-5-[(5-phosphoribosylamino)methylideneamino] imidazole-4-carboxamide isomerase from Xanthomonas oryzae pv. oryzae (strain MAFF 311018).